Consider the following 383-residue polypeptide: Processive diacylglycerol beta-glucosyltransferase (383 aa).

This sequence belongs to the glycosyltransferase 28 family. UgtP subfamily.

It is found in the cell membrane. The enzyme catalyses a 1,2-diacyl-3-O-(beta-D-glucopyranosyl)-sn-glycerol + UDP-alpha-D-glucose = a 1,2-diacyl-3-O-(beta-D-Glc-(1-&gt;6)-beta-D-Glc)-sn-glycerol + UDP + H(+). It catalyses the reaction a 1,2-diacyl-3-O-(beta-D-Glc-(1-&gt;6)-beta-D-Glc)-sn-glycerol + UDP-alpha-D-glucose = a 1,2-diacyl-3-O-(beta-D-Glc-(1-&gt;6)-beta-D-Glc-(1-&gt;6)-beta-D-Glc)-sn-glycerol + UDP + H(+). The catalysed reaction is a 1,2-diacyl-sn-glycerol + UDP-alpha-D-glucose = a 1,2-diacyl-3-O-(beta-D-glucopyranosyl)-sn-glycerol + UDP + H(+). The protein operates within glycolipid metabolism; diglucosyl-diacylglycerol biosynthesis. Functionally, processive glucosyltransferase involved in the biosynthesis of both the bilayer- and non-bilayer-forming membrane glucolipids. Is able to successively transfer up to three glucosyl residues to diacylglycerol (DAG), thereby catalyzing the formation of beta-monoglucosyl-DAG (3-O-(beta-D-glucopyranosyl)-1,2-diacyl-sn-glycerol), beta-diglucosyl-DAG (3-O-(beta-D-glucopyranosyl-beta-(1-&gt;6)-D-glucopyranosyl)-1,2-diacyl-sn-glycerol) and beta-triglucosyl-DAG (3-O-(beta-D-glucopyranosyl-beta-(1-&gt;6)-D-glucopyranosyl-beta-(1-&gt;6)-D-glucopyranosyl)-1,2-diacyl-sn-glycerol). Beta-diglucosyl-DAG is the predominant glycolipid found in Bacillales and is also used as a membrane anchor for lipoteichoic acid (LTA). The protein is Processive diacylglycerol beta-glucosyltransferase of Bacillus licheniformis (strain ATCC 14580 / DSM 13 / JCM 2505 / CCUG 7422 / NBRC 12200 / NCIMB 9375 / NCTC 10341 / NRRL NRS-1264 / Gibson 46).